A 120-amino-acid chain; its full sequence is Crustacean hyperglycemic hormones 2 (120 aa).

Positions 1–27 (MIAFHMVWSALLASLLLLLLAPSASPV) are cleaved as a signal peptide. Cystine bridges form between C53–C89, C69–C85, and C72–C98. V118 carries the valine amide modification.

It belongs to the arthropod CHH/MIH/GIH/VIH hormone family.

The protein localises to the secreted. Hormone found in the sinus gland of isopods and decapods which controls the blood sugar level. Has a secretagogue action over the amylase released from the midgut gland. May act as a stress hormone and may be involved in the control of molting and reproduction. The sequence is that of Crustacean hyperglycemic hormones 2 from Penaeus japonicus (Kuruma prawn).